Reading from the N-terminus, the 159-residue chain is Ribosomal RNA large subunit methyltransferase H (159 aa).

S-adenosyl-L-methionine contacts are provided by residues leucine 76, glycine 108, and 127-132; that span reads FSHMTF.

The protein belongs to the RNA methyltransferase RlmH family. In terms of assembly, homodimer.

It localises to the cytoplasm. It catalyses the reaction pseudouridine(1915) in 23S rRNA + S-adenosyl-L-methionine = N(3)-methylpseudouridine(1915) in 23S rRNA + S-adenosyl-L-homocysteine + H(+). Functionally, specifically methylates the pseudouridine at position 1915 (m3Psi1915) in 23S rRNA. This Halothermothrix orenii (strain H 168 / OCM 544 / DSM 9562) protein is Ribosomal RNA large subunit methyltransferase H.